The following is a 333-amino-acid chain: Ketol-acid reductoisomerase (NAD(P)(+)) (333 aa).

The 181-residue stretch at 2–182 (AKIYYDEDAS…GATRAGVIET (181 aa)) folds into the KARI N-terminal Rossmann domain. NADP(+) is bound by residues 25–28 (YGSQ), S51, and 83–86 (DTVQ). The active site involves H108. Position 134 (G134) interacts with NADP(+). The 145-residue stretch at 183–327 (TFREETETDL…KELRQMMPWL (145 aa)) folds into the KARI C-terminal knotted domain. 4 residues coordinate Mg(2+): D191, E195, E227, and E231. Position 252 (S252) interacts with substrate.

Belongs to the ketol-acid reductoisomerase family. Requires Mg(2+) as cofactor.

The enzyme catalyses (2R)-2,3-dihydroxy-3-methylbutanoate + NAD(+) = (2S)-2-acetolactate + NADH + H(+). It carries out the reaction (2R)-2,3-dihydroxy-3-methylbutanoate + NADP(+) = (2S)-2-acetolactate + NADPH + H(+). It functions in the pathway amino-acid biosynthesis; L-isoleucine biosynthesis; L-isoleucine from 2-oxobutanoate: step 2/4. Its pathway is amino-acid biosynthesis; L-valine biosynthesis; L-valine from pyruvate: step 2/4. In terms of biological role, involved in the biosynthesis of branched-chain amino acids (BCAA). Catalyzes an alkyl-migration followed by a ketol-acid reduction of (S)-2-acetolactate (S2AL) to yield (R)-2,3-dihydroxy-isovalerate. In the isomerase reaction, S2AL is rearranged via a Mg-dependent methyl migration to produce 3-hydroxy-3-methyl-2-ketobutyrate (HMKB). In the reductase reaction, this 2-ketoacid undergoes a metal-dependent reduction by NADPH or NADH to yield (R)-2,3-dihydroxy-isovalerate. The protein is Ketol-acid reductoisomerase (NAD(P)(+)) of Hydrogenobaculum sp. (strain Y04AAS1).